The following is a 158-amino-acid chain: HTH-type transcriptional repressor NicR (158 aa).

The 133-residue stretch at 20–152 (TEQVGHLLRK…ILYLLRKMID (133 aa)) folds into the HTH marR-type domain. Positions 66-89 (QAELIKATAVDQATIRGIVERLKA) form a DNA-binding region, H-T-H motif.

It functions in the pathway cofactor degradation; nicotinate degradation [regulation]. Functionally, transcriptional repressor for the nicCDEFTP and nicXR operons, encoding the lower aerobic nicotinate degradation pathway. Acts under non-induced conditions: repression of the nicCDEFTP and nicXR operons becomes alleviated in presence of 6-hydroxynicotinate (6HNA). The polypeptide is HTH-type transcriptional repressor NicR (nicR) (Pseudomonas putida (strain ATCC 47054 / DSM 6125 / CFBP 8728 / NCIMB 11950 / KT2440)).